The primary structure comprises 469 residues: Transcription factor E2FB (469 aa).

Disordered regions lie at residues 1-28 and 84-118; these read MSEE…PPLV and QTPV…AGSP. Composition is skewed to polar residues over residues 8–22 and 100–118; these read QFPS…SLSS and SAKS…AGSP. Residues 129-194 mediate DNA binding; the sequence is RYDSSLGLLT…TLKNRIQWKG (66 aa). A coiled-coil region spans residues 202-246; the sequence is ETIESIANLQDEVQNLAAEEARLDDQIRESQERLTSLSEDENNKR. The tract at residues 210–238 is leucine-zipper; it reads LQDEVQNLAAEEARLDDQIRESQERLTSL. Positions 319 to 374 are disordered; that stretch reads PQADEPSNVPDEPSNVPDVPSNLPSTSGLPENHDVSMPMKEESTERNMETQEVDDT. Basic and acidic residues predominate over residues 349 to 374; it reads ENHDVSMPMKEESTERNMETQEVDDT. Residues 403–419 form a retinoblastoma protein binding region; sequence DYWFRSEVGEVSITDMW. Residues 426–469 are disordered; the sequence is DWNQMITFDQDHAGPSDNKILEQPQTPSSPTPEESTATRSPTGS. The span at 447 to 469 shows a compositional bias: low complexity; that stretch reads EQPQTPSSPTPEESTATRSPTGS.

Belongs to the E2F/DP family. As to quaternary structure, heterodimer with DP proteins. Interacts (via dimerization domain) preferentially with DPA, but also with DPB. Interacts with PURA1 and retinoblastoma-related protein RBR1. Component of a DREAM-like complex which modulates a variety of developmentally regulated genes and of the mitotic genes in proliferating and differentiated cells. Interacts with MYB3R4 only at early stages of leaves development. In terms of processing, phosphorylated. As to expression, expressed in proliferating cells and several differentiated tissues. Detected in inflorescence and shoot apical meristems, cotyledonary vascular tissues, leaf primordia, young leaves, base of trichomes, central cylinder and elongation zone of roots, lateral root primordia, flowers, pistils of immature flowers and pollen grains.

The protein resides in the cytoplasm. Its subcellular location is the nucleus. Transcription activator that binds DNA cooperatively with DP proteins through the E2 recognition site, 5'-TTTC[CG]CGC-3' found in the promoter region of a number of genes whose products are involved in cell cycle regulation or in DNA replication. The binding of retinoblastoma-related proteins represses transactivation. Involved in the control of cell-cycle progression from G1 to S phase and from G2 to M phase. Stimulates cell proliferation and delays differentiation. Represses cell enlargement and endoreduplication in auxin-free conditions. This is Transcription factor E2FB (E2FB) from Arabidopsis thaliana (Mouse-ear cress).